The sequence spans 1001 residues: Receptor-type tyrosine-protein phosphatase N2 (1001 aa).

Positions 1-27 are cleaved as a signal peptide; that stretch reads MGPPLPLLLLLLLPPPLPRALPAPASA. Residues 1-407 are involved in localization to secretory granules; interaction with CPE; the sequence is MGPPLPLLLL…PEGPLLEKSS (407 aa). Residues 28–600 lie on the Extracellular side of the membrane; the sequence is RGRQLPGRLG…HQEEQEDSTK (573 aa). R259 is subject to Omega-N-methylarginine. Disordered stretches follow at residues 271–296, 308–359, and 394–459; these read PFSA…SMDD, QQNS…DAPE, and SPLL…LEDQ. Positions 312–325 are enriched in basic and acidic residues; it reads EVDRLGPLKEEKAD. S339 carries the post-translational modification Phosphoserine. The segment covering 340-355 has biased composition (basic and acidic residues); sequence QESHGRGAEGQPREQT. Positions 394–404 are enriched in low complexity; it reads SPLLPEGPLLE. Basic and acidic residues predominate over residues 405-416; sequence KSSREEIKKSEQ. A compositionally biased stretch (acidic residues) spans 417–428; it reads PEEVLSSEEETA. Phosphoserine occurs at positions 422 and 423. Positions 429-459 are enriched in basic and acidic residues; it reads GVEHVRSRTYSKDLFERKPNSEPQPRRLEDQ. N550 carries N-linked (GlcNAc...) asparagine glycosylation. The helical transmembrane segment at 601–621 threads the bilayer; sequence FILLTFLSIACILGVLLASSL. At 622–1001 the chain is on the cytoplasmic side; the sequence is AYCLRHNSHY…VNAILKALPQ (380 aa). The short motif at 652-661 is the Tyrosine-based internalization motif element; sequence YQELCRQRMA. Residues 663–705 form a disordered region; that stretch reads RPQDRSEGPHTSRINSVSSQFSDGPMPSPSARSSTSSWSEEPV. The span at 674 to 684 shows a compositional bias: polar residues; sequence SRINSVSSQFS. 2 positions are modified to phosphoserine: S678 and S684. Residues 691–705 are compositionally biased toward low complexity; the sequence is PSARSSTSSWSEEPV. Residue T697 is modified to Phosphothreonine. One can recognise a Tyrosine-protein phosphatase domain in the interval 731-991; sequence LEKEWEALCA…EFALTAVAEE (261 aa). Substrate contacts are provided by residues D899 and 931-937; that span reads CSDGAGR. The active-site Phosphocysteine intermediate is the C931. K956 bears the N6-acetyllysine mark. Q976 provides a ligand contact to substrate. The short motif at 990-996 is the Leucine-based sorting signal element; that stretch reads EEVNAIL.

The protein belongs to the protein-tyrosine phosphatase family. As to quaternary structure, self-associates. Interacts (via cytoplasmic domain) with PTPRN (via cytoplasmic domain). Interacts (precursor form) with CPE. Interacts with HAP1 isoform A. Interacts with AP2A1 or AP2A2 and AP1G1; indicative for an association with adaptor protein complex 2 (AP-2) and adaptor protein complex 1 (AP-1). Interacts with AP2M1; indicative for an association with adaptor protein complex 2 (AP-2). Interacts with MYO5A. In terms of processing, subject to proteolytic cleavage at multiple sites during maturation of secretory granules. In the brain at least IA-2beta71, IA-2beta64 and IA-2beta60 have been detected, in the pancreas and a pancreatic beta cell line only IA-2beta60 has been detected. Detected in brain. Detected in pancreas islets (at protein level). Detected in pancreas and brain.

It localises to the cytoplasmic vesicle. Its subcellular location is the secretory vesicle membrane. It is found in the secretory vesicle. The protein resides in the synaptic vesicle membrane. It carries out the reaction O-phospho-L-tyrosyl-[protein] + H2O = L-tyrosyl-[protein] + phosphate. In terms of biological role, plays a role in vesicle-mediated secretory processes. Required for normal accumulation of secretory vesicles in hippocampus, pituitary and pancreatic islets. Required for the accumulation of normal levels of insulin-containing vesicles and preventing their degradation. Plays a role in insulin secretion in response to glucose stimuli. Required for normal accumulation of the neurotransmitters norepinephrine, dopamine and serotonin in the brain. In females, but not in males, required for normal accumulation and secretion of pituitary hormones, such as luteinizing hormone (LH) and follicle-stimulating hormone (FSH). Required to maintain normal levels of renin expression and renin release. May regulate catalytic active protein-tyrosine phosphatases such as PTPRA through dimerization. Has phosphatidylinositol phosphatase activity; the PIPase activity is involved in its ability to regulate insulin secretion. Can dephosphorylate phosphatidylinositol 4,5-biphosphate (PI(4,5)P2), phosphatidylinositol 5-phosphate and phosphatidylinositol 3-phosphate. Regulates PI(4,5)P2 level in the plasma membrane and localization of cofilin at the plasma membrane and thus is indirectly involved in regulation of actin dynamics related to cell migration and metastasis; upon hydrolysis of PI(4,5)P2 cofilin is released from the plasma membrane and acts in the cytoplasm in severing F-actin filaments. The chain is Receptor-type tyrosine-protein phosphatase N2 (Ptprn2) from Mus musculus (Mouse).